The following is a 463-amino-acid chain: Secretogranin-3 (463 aa).

A signal peptide spans 1–20; sequence MGPKYVFITAIIGVFWHVQG. Disordered stretches follow at residues 87-111, 225-267, and 353-398; these read VKRS…DSTK, DDDK…PEED, and EDKN…KGKA. Basic and acidic residues-rich tracts occupy residues 102-111 and 229-262; these read GTLDDADSTK and QEGK…RNEL.

As to quaternary structure, interacts with CHGA. Interacts with secretogranin II/SCG2. Interacts (via C-terminus) with CPE.

The protein resides in the cytoplasmic vesicle. The protein localises to the secretory vesicle. It is found in the secretory vesicle membrane. Its subcellular location is the secreted. In terms of biological role, member of the granin protein family that regulates the biogenesis of secretory granules. Acts as a sorting receptor for intragranular proteins including chromogranin A/CHGA. May also play a role in angiogenesis. Promotes endothelial proliferation, migration and tube formation through MEK/ERK signaling pathway. The sequence is that of Secretogranin-3 (scg3) from Xenopus tropicalis (Western clawed frog).